We begin with the raw amino-acid sequence, 299 residues long: Porphobilinogen deaminase (299 aa).

S-(dipyrrolylmethanemethyl)cysteine is present on cysteine 234.

It belongs to the HMBS family. In terms of assembly, monomer. It depends on dipyrromethane as a cofactor.

It catalyses the reaction 4 porphobilinogen + H2O = hydroxymethylbilane + 4 NH4(+). Its pathway is porphyrin-containing compound metabolism; protoporphyrin-IX biosynthesis; coproporphyrinogen-III from 5-aminolevulinate: step 2/4. Functionally, tetrapolymerization of the monopyrrole PBG into the hydroxymethylbilane pre-uroporphyrinogen in several discrete steps. The protein is Porphobilinogen deaminase of Corynebacterium efficiens (strain DSM 44549 / YS-314 / AJ 12310 / JCM 11189 / NBRC 100395).